The primary structure comprises 407 residues: Phosphoglycerate kinase (407 aa).

Substrate contacts are provided by residues 21–23 (DLN), Arg36, 59–62 (HQGR), Arg116, and Arg156. ATP-binding positions include Glu332 and 358 to 361 (GGDT).

The protein belongs to the phosphoglycerate kinase family. As to quaternary structure, monomer.

The protein localises to the cytoplasm. The catalysed reaction is (2R)-3-phosphoglycerate + ATP = (2R)-3-phospho-glyceroyl phosphate + ADP. The protein operates within carbohydrate degradation; glycolysis; pyruvate from D-glyceraldehyde 3-phosphate: step 2/5. The polypeptide is Phosphoglycerate kinase (Halorubrum lacusprofundi (strain ATCC 49239 / DSM 5036 / JCM 8891 / ACAM 34)).